A 1135-amino-acid chain; its full sequence is METQKDEAAQAKGAAASGSTREQTAEKGAKNKAAEATEGPTSEPSSSGPGRLKKTAMKLFGGKKGICTLPSFFGGGRSKGSGKGSSKKGLSKSKTHDGLSEAAHGPEDVVSEGTGFSLPLPELPCQFPSSQSAHGALETGSRCKTSVAGATEKAVAEKFPSMPKPKKGLKGFFSSIRRHRKSKVTGAEQSEPGAKGPERVRARPHEHVSSAPQVPCFEETFQAPRKENANPQDAPGPKVSPTPEPSPPATEKMACKDPEKPMEACASAHVQPKPAPEASSLEEPHSPETGEKVVAGEVNPPNGPVGDPLSLLFGDVTSLKSFDSLTGCGDIIAEQDMDSMTDSMASGGQRANRDGTKRSSCLVTYQGGGEEMALPDDDDEEEEEEEEVELEEEEEEVKEEEEDDDLEYLWETAQMYPRPNMNLGYHPTTSPGHHGYMLLDPVRSYPGLAPGELLTPQSDQQESAPNSDEGYYDSTTPGFEDDSGEALGLVRRDCLPRDSYSGDALYEFYEPDDSLENSPPGDDCLYDLHGRSSEMFDPFLNFEPFLSSRPPGAMETEEERLVTIQKQLLYWELRREQLEAQEARAREAHAREAHAREAYTREAYGREAYAREAHTWEAHGREARTREAQAREVRCRETQVRETQARQEKPVLEYQMRPLGPSVMGLAAGVSGTSQISHRGITSAFPTTASSEPDWRDFRPLEKRYEGTCSKKDQSTCLMQLFQSDAMFEPDMQEANFGGSPRRAYPTYSPPEDPEEEEVEKEGNATVSFSQALVEFTSNGNLFSSMSCSSDSDSSFTQNLPELPPMVTFDIADVERDGEGKCEENPEFHNDEDLAASLEAFELGYYHKHAFNNYHSRFYQGLPWGVSSLPRYLGLPGLHPRPPPAAMALNRRSRSLDTAETLEMELSNSHLVQGYLESDELQAQQEDSDEEDEEEEEGEWSRDSPLSLYTEPPGAYDWPAWAPCPLPVGPGPAWISPNQLDRPSSQSPYRQATCCIPPMTMSISLSVPESRAPGESGPQLARPSHLHLPMGPCYNLQPQASQSMRARPRDVLLPVDEPSCSSSSGGFSPSPLPQAKPVGITHGIPQLPRVRPEHPQPQPTHYGPSSLDLSKERAEQGASLATSYSSTAMNGNLAK.

At Met1 the chain carries N-acetylmethionine. Disordered stretches follow at residues 1 to 115, 156 to 308, 339 to 405, 447 to 484, 736 to 764, 921 to 948, and 1007 to 1135; these read METQ…EGTG, AEKF…VGDP, SMTD…EDDD, GLAPGELLTPQSDQQESAPNSDEGYYDSTTPGFEDDSG, NFGGSPRRAYPTYSPPEDPEEEEVEKEGN, LQAQQEDSDEEDEEEEEGEWSRDSPLSL, and VPES…NLAK. A compositionally biased stretch (low complexity) spans 10–19; the sequence is QAKGAAASGS. Residues 23–35 show a composition bias toward basic and acidic residues; sequence QTAEKGAKNKAAE. Residues 36–50 show a composition bias toward low complexity; it reads ATEGPTSEPSSSGPG. Residues 73-83 show a composition bias toward gly residues; the sequence is FGGGRSKGSGK. Composition is skewed to basic and acidic residues over residues 94–107 and 196–208; these read KTHDGLSEAAHGPE and GPERVRARPHEHV. Residues 238–248 show a composition bias toward pro residues; sequence KVSPTPEPSPP. Residue Ser246 is modified to Phosphoserine. 2 stretches are compositionally biased toward basic and acidic residues: residues 253 to 262 and 282 to 291; these read MACKDPEKPM and EEPHSPETGE. The segment covering 373–405 has biased composition (acidic residues); it reads ALPDDDDEEEEEEEEVELEEEEEEVKEEEEDDD. The span at 455–466 shows a compositional bias: polar residues; the sequence is TPQSDQQESAPN. The span at 926–938 shows a compositional bias: acidic residues; that stretch reads EDSDEEDEEEEEG. The segment covering 1058–1069 has biased composition (low complexity); that stretch reads PSCSSSSGGFSP. The span at 1119–1135 shows a compositional bias: polar residues; that stretch reads SLATSYSSTAMNGNLAK.

This sequence belongs to the Amer family. Interacts with CTNNB1, AXIN1, LRP6, KEAP1, APC and BTRC. Interacts with SCF (SKP1-CUL1-F-box protein) E3 ubiquitin-protein ligase complexes containing BTRC and/or FBXW11. Identified in the beta-catenin destruction complex containing CTNNB1, APC, AXIN1 and AXIN2. Interacts with WT1. Detected in fetal and adult kidney, brain and spleen.

The protein localises to the cytoplasm. It localises to the cell membrane. The protein resides in the nucleus. Regulator of the canonical Wnt signaling pathway. Acts by specifically binding phosphatidylinositol 4,5-bisphosphate (PtdIns(4,5)P2), translocating to the cell membrane and interacting with key regulators of the canonical Wnt signaling pathway, such as components of the beta-catenin destruction complex. Acts both as a positive and negative regulator of the Wnt signaling pathway, depending on the context: acts as a positive regulator by promoting LRP6 phosphorylation. Also acts as a negative regulator by acting as a scaffold protein for the beta-catenin destruction complex and promoting stabilization of Axin at the cell membrane. Promotes CTNNB1 ubiquitination and degradation. Involved in kidney development. The chain is APC membrane recruitment protein 1 (AMER1) from Homo sapiens (Human).